The primary structure comprises 92 residues: Bombyxin A-9 (92 aa).

Positions 1-19 are cleaved as a signal peptide; it reads MKLLLAIALMLTTVMWAST. Gln20 carries the post-translational modification Pyrrolidone carboxylic acid. 3 disulfide bridges follow: Cys29/Cys79, Cys41/Cys92, and Cys78/Cys83. The propeptide at 50–71 is c peptide like; that stretch reads SDAQFASYGSAWLMPYSEGRDQ.

This sequence belongs to the insulin family. In terms of assembly, heterodimer of a B chain and an A chain linked by two disulfide bonds.

The protein resides in the secreted. Functionally, brain peptide responsible for activation of prothoracic glands to produce ecdysone in insects. This is Bombyxin A-9 (BBXA9) from Bombyx mori (Silk moth).